A 447-amino-acid polypeptide reads, in one-letter code: MRSSTLQDPRRRDPQDDVYVDITDRLRFAILYSRPKSASNVHYFSIDNELEYENFSEDFGPLNLAMVYRYCCKINKKLKSITMLRKKIVHFTGSDQRKQANAAFLVGCYMVIYLGRTPEAAYRILIFGDTPYIPFRDAAYGSCNFYITLLDCFHAVKKAMQYGFLNFNSFNLDEYEHYEKAENGDLNWIIPDRFIAFCGPHSRARLESGYHQHSPETYIQYFKNHNVTTIIRLNKRMYDAKRFTDAGFDHHDLFFADGSTPTDAIVKRFLDICENAEGAIAVHCKAGLGRTGTLIACYIMKHYRMTAAETIAWVRICRPGLVIGPQQQFLVMKQTSLWLEGDYFRQRLKGQENGQHRAAFSKLLSGVDDISINGVENQDQQEPKPYSDDDEINGVTQGDRSRALKRRRQSKTNDILLPSPLAVLTFTLCSVVIWWIVCDYILPILLF.

Positions 14 to 168 are a; the sequence is PQDDVYVDIT…AMQYGFLNFN (155 aa). The tract at residues 169-182 is linker; that stretch reads SFNLDEYEHYEKAE. Residues 183–349 form a b region; that stretch reads NGDLNWIIPD…EGDYFRQRLK (167 aa). Positions 184–344 constitute a Tyrosine-protein phosphatase domain; it reads GDLNWIIPDR…TSLWLEGDYF (161 aa). Cys-284 acts as the Phosphocysteine intermediate in catalysis. A helical membrane pass occupies residues 426-446; it reads FTLCSVVIWWIVCDYILPILL.

It belongs to the protein-tyrosine phosphatase family. Non-receptor class CDC14 subfamily.

The protein resides in the endoplasmic reticulum membrane. It carries out the reaction O-phospho-L-tyrosyl-[protein] + H2O = L-tyrosyl-[protein] + phosphate. The catalysed reaction is O-phospho-L-seryl-[protein] + H2O = L-seryl-[protein] + phosphate. The enzyme catalyses O-phospho-L-threonyl-[protein] + H2O = L-threonyl-[protein] + phosphate. Functionally, dual-specificity phosphatase. Preferentially dephosphorylates proteins modified by proline-directed kinases. This chain is Dual specificity protein phosphatase CDC14C, found in Homo sapiens (Human).